The chain runs to 626 residues: Basic helix-loop-helix ARNT-like protein 1 (626 aa).

Residues 1–58 (MADQRMDISSTISDFMSPGPTDLLSGSLSTSGVDCNRKRKGSATDYQESMDTDKDDPH) form a disordered region. Phosphoserine; by GSK3-beta is present on S17. Positions 17–32 (SPGPTDLLSGSLSTSG) are enriched in low complexity. T21 carries the phosphothreonine; by GSK3-beta modification. The Nuclear localization signal motif lies at 36–41 (NRKRKG). A bHLH domain is found at 72–125 (NAREAHSQIEKRRRDKMNSFIDELASLVPTCNAMSRKLDKLTVLRMAVQHMKTL). S78 carries the phosphoserine modification. S90 carries the phosphoserine; by CK2 modification. Positions 142-152 (LSDDELKHLIL) match the Nuclear export signal 1 motif. The PAS 1 domain maps to 143 to 215 (SDDELKHLIL…EQLSSSDTAP (73 aa)). K252 is covalently cross-linked (Glycyl lysine isopeptide (Lys-Gly) (interchain with G-Cter in SUMO2 and SUMO3)). A Glycyl lysine isopeptide (Lys-Gly) (interchain with G-Cter in SUMO); alternate cross-link involves residue K259. K259 participates in a covalent cross-link: Glycyl lysine isopeptide (Lys-Gly) (interchain with G-Cter in SUMO2); alternate. The 71-residue stretch at 326-396 (PQPVNGEIRV…ECHRQVLQTR (71 aa)) folds into the PAS 2 domain. The Nuclear export signal 2 motif lies at 361–369 (LAYLPQELL). Positions 401-444 (TNCYKFKIKDGSFITLRSRWFSFMNPWTKEVEYIVSTNTVVLAN) constitute a PAC domain. Disordered stretches follow at residues 459–492 (SPHSMDSMLPSGEGGPKRTHPTVPGIPGGTRAGA) and 511–595 (GSSP…SPSN). The interval 508-588 (RIRGSSPSSC…IGIDMIDNDQ (81 aa)) is interaction with CIART. A compositionally biased stretch (low complexity) spans 511–521 (GSSPSSCGSSP). Residue K538 is modified to N6-acetyllysine.

Component of the circadian clock oscillator which includes the CRY1/2 proteins, CLOCK or NPAS2, BMAL1 or BMAL2, CSNK1D and/or CSNK1E, TIMELESS and the PER1/2/3 proteins. Forms a heterodimer with CLOCK. The CLOCK-BMAL1 heterodimer is required for E-box-dependent transactivation, for CLOCK nuclear translocation and degradation, and, for phosphorylation of both CLOCK and BMAL1. Part of a nuclear complex which also includes RACK1 and PRKCA; RACK1 and PRKCA are recruited to the complex in a circadian manner. Interacts with NPAS2. Interacts with EZH2. Interacts with SUMO3. Interacts with SIRT1. Interacts with AHR. Interacts with ID1, ID2 and ID3. Interacts with DDX4. Interacts with OGT. Interacts with EED and SUZ12. Interacts with MTA1. Interacts with CIART. Interacts with HSP90. Interacts with KAT2B and EP300. Interacts with BHLHE40/DEC1 and BHLHE41/DEC2. Interacts with RELB and the interaction is enhanced in the presence of CLOCK. Interacts with PER1, PER2, CRY1 and CRY2 and this interaction requires a translocation to the nucleus. Interaction of the CLOCK-BMAL1 heterodimer with PER or CRY inhibits transcription activation. Interaction of the CLOCK-BMAL1 with CRY1 is independent of DNA but with PER2 is off DNA. The CLOCK-BMAL1 heterodimer interacts with GSK3B. Interacts with KDM5A. Interacts with KMT2A; in a circadian manner. Interacts with UBE3A. Interacts with PRKCG. Interacts with MAGEL2. Interacts with NCOA2. Interacts with THRAP3. The CLOCK-BMAL1 heterodimer interacts with PASD1. Interacts with PASD1. Interacts with USP9X. Interacts with PIWIL2 (via PIWI domain). Interacts with HDAC3. Interacts with HNF4A. Ubiquitinated, leading to its proteasomal degradation. Deubiquitinated by USP9X. Post-translationally, O-glycosylated; contains O-GlcNAc. O-glycosylation by OGT prevents protein degradation by inhibiting ubiquitination. It also stabilizes the CLOCK-BMAL1 heterodimer thereby increasing CLOCK-BMAL1-mediated transcription of genes in the negative loop of the circadian clock such as PER1/2/3 and CRY1/2. In terms of processing, acetylated on Lys-538 by CLOCK during the repression phase of the circadian cycle. Acetylation facilitates recruitment of CRY1 protein and initiates the repression phase of the circadian cycle. Acetylated at Lys-538 by KAT5 during the activation phase of the cycle, leading to recruitment of the positive transcription elongation factor b (P-TEFb) and BRD4, followed by productive elongation of circadian transcripts. Deacetylated by SIRT1, which may result in decreased protein stability. Phosphorylated upon dimerization with CLOCK. Phosphorylation enhances the transcriptional activity, alters the subcellular localization and decreases the stability of the CLOCK-BMAL1 heterodimer by promoting its degradation. Phosphorylation shows circadian variations in the liver with a peak between CT10 to CT14. Phosphorylation at Ser-90 by CK2 is essential for its nuclear localization, its interaction with CLOCK and controls CLOCK nuclear entry. Dephosphorylation at Ser-78 is important for dimerization with CLOCK and transcriptional activity. Post-translationally, sumoylated on Lys-259 upon dimerization with CLOCK. Predominantly conjugated to poly-SUMO2/3 rather than SUMO1 and the level of these conjugates undergo rhythmic variation, peaking at CT9-CT12. Sumoylation localizes it exclusively to the PML body and promotes its ubiquitination in the PML body, ubiquitin-dependent proteasomal degradation and the transcriptional activity of the CLOCK-BMAL1 heterodimer. In terms of processing, undergoes lysosome-mediated degradation in a time-dependent manner in the liver.

The protein localises to the nucleus. It localises to the cytoplasm. Its subcellular location is the PML body. Functionally, transcriptional activator which forms a core component of the circadian clock. The circadian clock, an internal time-keeping system, regulates various physiological processes through the generation of approximately 24 hour circadian rhythms in gene expression, which are translated into rhythms in metabolism and behavior. It is derived from the Latin roots 'circa' (about) and 'diem' (day) and acts as an important regulator of a wide array of physiological functions including metabolism, sleep, body temperature, blood pressure, endocrine, immune, cardiovascular, and renal function. Consists of two major components: the central clock, residing in the suprachiasmatic nucleus (SCN) of the brain, and the peripheral clocks that are present in nearly every tissue and organ system. Both the central and peripheral clocks can be reset by environmental cues, also known as Zeitgebers (German for 'timegivers'). The predominant Zeitgeber for the central clock is light, which is sensed by retina and signals directly to the SCN. The central clock entrains the peripheral clocks through neuronal and hormonal signals, body temperature and feeding-related cues, aligning all clocks with the external light/dark cycle. Circadian rhythms allow an organism to achieve temporal homeostasis with its environment at the molecular level by regulating gene expression to create a peak of protein expression once every 24 hours to control when a particular physiological process is most active with respect to the solar day. Transcription and translation of core clock components (CLOCK, NPAS2, BMAL1, BMAL2, PER1, PER2, PER3, CRY1 and CRY2) plays a critical role in rhythm generation, whereas delays imposed by post-translational modifications (PTMs) are important for determining the period (tau) of the rhythms (tau refers to the period of a rhythm and is the length, in time, of one complete cycle). A diurnal rhythm is synchronized with the day/night cycle, while the ultradian and infradian rhythms have a period shorter and longer than 24 hours, respectively. Disruptions in the circadian rhythms contribute to the pathology of cardiovascular diseases, cancer, metabolic syndromes and aging. A transcription/translation feedback loop (TTFL) forms the core of the molecular circadian clock mechanism. Transcription factors, CLOCK or NPAS2 and BMAL1 or BMAL2, form the positive limb of the feedback loop, act in the form of a heterodimer and activate the transcription of core clock genes and clock-controlled genes (involved in key metabolic processes), harboring E-box elements (5'-CACGTG-3') within their promoters. The core clock genes: PER1/2/3 and CRY1/2 which are transcriptional repressors form the negative limb of the feedback loop and interact with the CLOCK|NPAS2-BMAL1|BMAL2 heterodimer inhibiting its activity and thereby negatively regulating their own expression. This heterodimer also activates nuclear receptors NR1D1/2 and RORA/B/G, which form a second feedback loop and which activate and repress BMAL1 transcription, respectively. BMAL1 positively regulates myogenesis and negatively regulates adipogenesis via the transcriptional control of the genes of the canonical Wnt signaling pathway. Plays a role in normal pancreatic beta-cell function; regulates glucose-stimulated insulin secretion via the regulation of antioxidant genes NFE2L2/NRF2 and its targets SESN2, PRDX3, CCLC and CCLM. Negatively regulates the mTORC1 signaling pathway; regulates the expression of MTOR and DEPTOR. Controls diurnal oscillations of Ly6C inflammatory monocytes; rhythmic recruitment of the PRC2 complex imparts diurnal variation to chemokine expression that is necessary to sustain Ly6C monocyte rhythms. Regulates the expression of HSD3B2, STAR, PTGS2, CYP11A1, CYP19A1 and LHCGR in the ovary and also the genes involved in hair growth. Plays an important role in adult hippocampal neurogenesis by regulating the timely entry of neural stem/progenitor cells (NSPCs) into the cell cycle and the number of cell divisions that take place prior to cell-cycle exit. Regulates the circadian expression of CIART and KLF11. The CLOCK-BMAL1 heterodimer regulates the circadian expression of SERPINE1/PAI1, VWF, B3, CCRN4L/NOC, NAMPT, DBP, MYOD1, PPARGC1A, PPARGC1B, SIRT1, GYS2, F7, NGFR, GNRHR, BHLHE40/DEC1, ATF4, MTA1, KLF10 and also genes implicated in glucose and lipid metabolism. Promotes rhythmic chromatin opening, regulating the DNA accessibility of other transcription factors. May play a role in spermatogenesis; contributes to the chromatoid body assembly and physiology. The NPAS2-BMAL1 heterodimer positively regulates the expression of MAOA, F7 and LDHA and modulates the circadian rhythm of daytime contrast sensitivity by regulating the rhythmic expression of adenylate cyclase type 1 (ADCY1) in the retina. The preferred binding motif for the CLOCK-BMAL1 heterodimer is 5'-CACGTGA-3', which contains a flanking adenine nucleotide at the 3-prime end of the canonical 6-nucleotide E-box sequence. CLOCK specifically binds to the half-site 5'-CAC-3', while BMAL1 binds to the half-site 5'-GTGA-3'. The CLOCK-BMAL1 heterodimer also recognizes the non-canonical E-box motifs 5'-AACGTGA-3' and 5'-CATGTGA-3'. Essential for the rhythmic interaction of CLOCK with ASS1 and plays a critical role in positively regulating CLOCK-mediated acetylation of ASS1. Plays a role in protecting against lethal sepsis by limiting the expression of immune checkpoint protein CD274 in macrophages in a PKM2-dependent manner. Regulates the diurnal rhythms of skeletal muscle metabolism via transcriptional activation of genes promoting triglyceride synthesis (DGAT2) and metabolic efficiency (COQ10B). The sequence is that of Basic helix-loop-helix ARNT-like protein 1 from Rattus norvegicus (Rat).